Consider the following 443-residue polypeptide: Trigger factor (443 aa).

Positions 163-249 (KDAAIIDYQA…LKSLKEEILP (87 aa)) constitute a PPIase FKBP-type domain.

It belongs to the FKBP-type PPIase family. Tig subfamily.

It localises to the cytoplasm. The enzyme catalyses [protein]-peptidylproline (omega=180) = [protein]-peptidylproline (omega=0). Its function is as follows. Involved in protein export. Acts as a chaperone by maintaining the newly synthesized protein in an open conformation. Functions as a peptidyl-prolyl cis-trans isomerase. The polypeptide is Trigger factor (Desulfosudis oleivorans (strain DSM 6200 / JCM 39069 / Hxd3) (Desulfococcus oleovorans)).